We begin with the raw amino-acid sequence, 182 residues long: Large ribosomal subunit protein uL5 (182 aa).

This sequence belongs to the universal ribosomal protein uL5 family. Part of the 50S ribosomal subunit; part of the 5S rRNA/L5/L18/L25 subcomplex. Contacts the 5S rRNA and the P site tRNA. Forms a bridge to the 30S subunit in the 70S ribosome.

This is one of the proteins that bind and probably mediate the attachment of the 5S RNA into the large ribosomal subunit, where it forms part of the central protuberance. In the 70S ribosome it contacts protein S13 of the 30S subunit (bridge B1b), connecting the 2 subunits; this bridge is implicated in subunit movement. Contacts the P site tRNA; the 5S rRNA and some of its associated proteins might help stabilize positioning of ribosome-bound tRNAs. This is Large ribosomal subunit protein uL5 from Coxiella burnetii (strain CbuK_Q154) (Coxiella burnetii (strain Q154)).